Consider the following 171-residue polypeptide: S-ribosylhomocysteine lyase (171 aa).

3 residues coordinate Fe cation: His54, His58, and Cys128.

Belongs to the LuxS family. Homodimer. It depends on Fe cation as a cofactor.

It catalyses the reaction S-(5-deoxy-D-ribos-5-yl)-L-homocysteine = (S)-4,5-dihydroxypentane-2,3-dione + L-homocysteine. In terms of biological role, involved in the synthesis of autoinducer 2 (AI-2) which is secreted by bacteria and is used to communicate both the cell density and the metabolic potential of the environment. The regulation of gene expression in response to changes in cell density is called quorum sensing. Catalyzes the transformation of S-ribosylhomocysteine (RHC) to homocysteine (HC) and 4,5-dihydroxy-2,3-pentadione (DPD). The sequence is that of S-ribosylhomocysteine lyase from Pectobacterium carotovorum subsp. carotovorum (strain PC1).